A 302-amino-acid chain; its full sequence is Phosphoribosylaminoimidazole-succinocarboxamide synthase (302 aa).

This sequence belongs to the SAICAR synthetase family.

It carries out the reaction 5-amino-1-(5-phospho-D-ribosyl)imidazole-4-carboxylate + L-aspartate + ATP = (2S)-2-[5-amino-1-(5-phospho-beta-D-ribosyl)imidazole-4-carboxamido]succinate + ADP + phosphate + 2 H(+). The protein operates within purine metabolism; IMP biosynthesis via de novo pathway; 5-amino-1-(5-phospho-D-ribosyl)imidazole-4-carboxamide from 5-amino-1-(5-phospho-D-ribosyl)imidazole-4-carboxylate: step 1/2. This Ralstonia nicotianae (strain ATCC BAA-1114 / GMI1000) (Ralstonia solanacearum) protein is Phosphoribosylaminoimidazole-succinocarboxamide synthase.